Consider the following 623-residue polypeptide: Fanconi anemia group G protein homolog (623 aa).

TPR repeat units lie at residues 251-284, 349-382, 458-491, and 517-550; these read VQVYTALGACLRKMGNPQRALLYLTEALKVGTTC, SQAKHLLASRCLQTGRAEDAAEHYLDLLAMLLGG, SATHLLQGQAWSQLKAQKEALSEFSQCLELLFRT, and VAALISRGLEWVASGQDTKALSDFLLSVQICPGN.

As to quaternary structure, belongs to the multisubunit FA complex composed of FANCA, FANCB, FANCC, FANCE, FANCF, FANCG, FANCL/PHF9 and FANCM. In complex with FANCF, FANCA and FANCL, but not with FANCC, nor FANCE, interacts with HES1; this interaction may be essential for the stability and nuclear localization of FA core complex proteins. The complex with FANCC and FANCG may also include EIF2AK2 and HSP70. Highest expression levels in spleen, thymus and testis.

Its subcellular location is the nucleus. In terms of biological role, DNA repair protein that may operate in a postreplication repair or a cell cycle checkpoint function. May be implicated in interstrand DNA cross-link repair and in the maintenance of normal chromosome stability. Candidate tumor suppressor gene. The polypeptide is Fanconi anemia group G protein homolog (Fancg) (Mus musculus (Mouse)).